Here is a 297-residue protein sequence, read N- to C-terminus: MSSAHFNRGPAYGLSAEVKNKLAQKYDHQREQELREWIEGVTGRRIGNNFMDGLKDGIILCEFINKLQPGSVKKVNESTQNWHQLENIGNFIKAITKYGVKPHDIFEANDLFENTNHTQVQSTLLALASMAKTKGNKVNVGVKYAEKQERRFEPEKLREGRNIIGLQMGTNKFASQQGMTAYGTRRHLYDPKLGTDQPLDQATISLQMGTNKGASQAGMTAPGTKRQIFEPGLGMEHCDTLNVSLQMGSNKGASQRGMTVYGLPRQVYDPKYCLTPEYPELGEPAHNHHPHNYYNSA.

Positions histidine 28–alanine 131 constitute a Calponin-homology (CH) domain. 3 Calponin-like repeats span residues isoleucine 164–tyrosine 189, isoleucine 204–phenylalanine 229, and valine 243–tyrosine 268. Phosphothreonine; by ROCK2 is present on threonine 170. Serine 175 carries the post-translational modification Phosphoserine; by ROCK2. A phosphothreonine; by ROCK2 mark is found at threonine 180 and threonine 184. Position 259 is a phosphothreonine; by ROCK2 (threonine 259).

It belongs to the calponin family.

In terms of biological role, thin filament-associated protein that is implicated in the regulation and modulation of smooth muscle contraction. It is capable of binding to actin, calmodulin and tropomyosin. The interaction of calponin with actin inhibits the actomyosin Mg-ATPase activity. The chain is Calponin-1 (CNN1) from Bos taurus (Bovine).